The primary structure comprises 1211 residues: Homeodomain-interacting protein kinase 1 (1211 aa).

A Glycyl lysine isopeptide (Lys-Gly) (interchain with G-Cter in SUMO); alternate cross-link involves residue Lys25. Residue Lys25 forms a Glycyl lysine isopeptide (Lys-Gly) (interchain with G-Cter in SUMO2); alternate linkage. Glycyl lysine isopeptide (Lys-Gly) (interchain with G-Cter in SUMO2) cross-links involve residues Lys120 and Lys124. One can recognise a Protein kinase domain in the interval 190-518; sequence YEVLEFLGRG…PLKTLNHQFV (329 aa). ATP contacts are provided by residues 196-204 and Lys219; that span reads LGRGTFGQV. Asp315 acts as the Proton acceptor in catalysis. The segment at 835-856 is disordered; the sequence is QQQSSSLPSRKNKQSAPVSSTS. The short motif at 844-847 is the Nuclear localization signal 1 (NLS1) element; sequence RKNK. Ser872 bears the Phosphoserine mark. The tract at residues 885 to 1094 is interaction with TP53; that stretch reads PVQDQHQPII…FQHGSPLHST (210 aa). A required for localization to nuclear speckles region spans residues 891–998; the sequence is QPIIIPDTPS…PLKTQLGDCT (108 aa). Residues 902–926 form an SUMO interaction motifs (SIM); required for nuclear localization and kinase activity region; the sequence is PVSVITIRSDTDEEEDNKFKPSSSS. Residue Lys991 forms a Glycyl lysine isopeptide (Lys-Gly) (interchain with G-Cter in SUMO2) linkage. Disordered stretches follow at residues 1002 to 1023, 1047 to 1070, and 1085 to 1105; these read QASGLLSSSKTKPVASVSGQSS, LSQNQQSSSASTSQERSSNPAPRR, and FQHGSPLHSTGHPHLAPAPAH. Composition is skewed to low complexity over residues 1048-1064 and 1096-1105; these read SQNQQSSSASTSQERSS and HPHLAPAPAH. Ser1201 carries the post-translational modification Phosphoserine. Lys1204 participates in a covalent cross-link: Glycyl lysine isopeptide (Lys-Gly) (interchain with G-Cter in SUMO).

The protein belongs to the protein kinase superfamily. CMGC Ser/Thr protein kinase family. HIPK subfamily. In terms of assembly, interacts with Nkx1-2, Nkx2-5, MYB, PARK7, DAXX and p53/TP53. Part of a cytoplasmic complex made of HIPK1, DAB2IP and MAP3K5 in response to TNF. This complex formation promotes MAP3K5-JNK activation and subsequent apoptosis. Post-translationally, phosphorylated and activated by JNK1. Autophosphorylated. In terms of processing, sumoylated. When conjugated it is directed to nuclear speckles. SENP1-mediated desumoylation is mediated by TNF in response to stress stimuli, triggering transient translocation from nucleus to cytoplasm.

It localises to the nucleus. The protein localises to the cytoplasm. The protein resides in the nucleus speckle. It catalyses the reaction L-seryl-[protein] + ATP = O-phospho-L-seryl-[protein] + ADP + H(+). It carries out the reaction L-threonyl-[protein] + ATP = O-phospho-L-threonyl-[protein] + ADP + H(+). Functionally, serine/threonine-protein kinase involved in transcription regulation and TNF-mediated cellular apoptosis. Plays a role as a corepressor for homeodomain transcription factors. Phosphorylates DAXX and MYB. Phosphorylates DAXX in response to stress, and mediates its translocation from the nucleus to the cytoplasm. Inactivates MYB transcription factor activity by phosphorylation. Prevents MAP3K5-JNK activation in the absence of TNF. TNF triggers its translocation to the cytoplasm in response to stress stimuli, thus activating nuclear MAP3K5-JNK by derepression and promoting apoptosis. May be involved in anti-oxidative stress responses. Involved in the regulation of eye size, lens formation and retinal lamination during late embryogenesis. Promotes angiogenesis and to be involved in erythroid differentiation. May be involved in malignant squamous cell tumor formation. Phosphorylates PAGE4 at 'Thr-51' which is critical for the ability of PAGE4 to potentiate the transcriptional activator activity of JUN. The sequence is that of Homeodomain-interacting protein kinase 1 from Rattus norvegicus (Rat).